We begin with the raw amino-acid sequence, 683 residues long: Methionine--tRNA ligase (683 aa).

The short motif at 15-25 (PYANGPIHLGH) is the 'HIGH' region element. Positions 146, 149, 159, and 162 each coordinate Zn(2+). A 'KMSKS' region motif is present at residues 332–336 (KMSKS). Lysine 335 is an ATP binding site. The tRNA-binding domain occupies 581–683 (DFCKVDLRVA…AGAKAGQRVK (103 aa)).

It belongs to the class-I aminoacyl-tRNA synthetase family. MetG type 1 subfamily. In terms of assembly, homodimer. The cofactor is Zn(2+).

It is found in the cytoplasm. It catalyses the reaction tRNA(Met) + L-methionine + ATP = L-methionyl-tRNA(Met) + AMP + diphosphate. In terms of biological role, is required not only for elongation of protein synthesis but also for the initiation of all mRNA translation through initiator tRNA(fMet) aminoacylation. In Histophilus somni (strain 2336) (Haemophilus somnus), this protein is Methionine--tRNA ligase.